Consider the following 228-residue polypeptide: Protein slowmo homolog (228 aa).

A PRELI/MSF1 domain is found at 1–172; sequence MPLFETIKHT…TIIKVQKEAE (172 aa).

This sequence belongs to the slowmo family.

In Dictyostelium discoideum (Social amoeba), this protein is Protein slowmo homolog (slmo).